The chain runs to 251 residues: Putative deaminase AgaI (251 aa).

Asp86 (proton acceptor; for enolization step) is an active-site residue. Asn154 acts as the For ring-opening step in catalysis. His156 serves as the catalytic Proton acceptor; for ring-opening step. Residue Glu161 is the For ring-opening step of the active site.

The protein belongs to the glucosamine/galactosamine-6-phosphate isomerase family.

The chain is Putative deaminase AgaI (agaI) from Escherichia coli (strain K12).